Here is a 310-residue protein sequence, read N- to C-terminus: Porphobilinogen deaminase (310 aa).

Position 236 is an S-(dipyrrolylmethanemethyl)cysteine (Cys236).

This sequence belongs to the HMBS family. As to quaternary structure, monomer. It depends on dipyrromethane as a cofactor.

The catalysed reaction is 4 porphobilinogen + H2O = hydroxymethylbilane + 4 NH4(+). The protein operates within porphyrin-containing compound metabolism; protoporphyrin-IX biosynthesis; coproporphyrinogen-III from 5-aminolevulinate: step 2/4. Functionally, tetrapolymerization of the monopyrrole PBG into the hydroxymethylbilane pre-uroporphyrinogen in several discrete steps. The chain is Porphobilinogen deaminase from Nitratiruptor sp. (strain SB155-2).